A 390-amino-acid polypeptide reads, in one-letter code: 3-ketoacyl-CoA thiolase (390 aa).

The active-site Acyl-thioester intermediate is Cys-95. Active-site proton acceptor residues include His-346 and Cys-376.

Belongs to the thiolase-like superfamily. Thiolase family. Heterotetramer of two alpha chains (FadB) and two beta chains (FadA).

The protein resides in the cytoplasm. It catalyses the reaction an acyl-CoA + acetyl-CoA = a 3-oxoacyl-CoA + CoA. The protein operates within lipid metabolism; fatty acid beta-oxidation. In terms of biological role, catalyzes the final step of fatty acid oxidation in which acetyl-CoA is released and the CoA ester of a fatty acid two carbons shorter is formed. This chain is 3-ketoacyl-CoA thiolase, found in Psychrobacter arcticus (strain DSM 17307 / VKM B-2377 / 273-4).